Here is a 352-residue protein sequence, read N- to C-terminus: Anthranilate phosphoribosyltransferase (352 aa).

Residues glycine 83, 86–87 (GD), threonine 91, 93–96 (NIST), 111–119 (KHGGRSVSS), and alanine 123 each bind 5-phospho-alpha-D-ribose 1-diphosphate. Position 83 (glycine 83) interacts with anthranilate. Position 95 (serine 95) interacts with Mg(2+). Arginine 169 contacts anthranilate. Mg(2+) is bound by residues aspartate 228 and glutamate 229.

It belongs to the anthranilate phosphoribosyltransferase family. As to quaternary structure, homodimer. Mg(2+) serves as cofactor.

It catalyses the reaction N-(5-phospho-beta-D-ribosyl)anthranilate + diphosphate = 5-phospho-alpha-D-ribose 1-diphosphate + anthranilate. It participates in amino-acid biosynthesis; L-tryptophan biosynthesis; L-tryptophan from chorismate: step 2/5. In terms of biological role, catalyzes the transfer of the phosphoribosyl group of 5-phosphorylribose-1-pyrophosphate (PRPP) to anthranilate to yield N-(5'-phosphoribosyl)-anthranilate (PRA). This is Anthranilate phosphoribosyltransferase from Neisseria meningitidis serogroup C (strain 053442).